Consider the following 364-residue polypeptide: Fructose-bisphosphate aldolase B (364 aa).

Ala-2 is subject to N-acetylalanine. Lys-13 carries the post-translational modification N6-succinyllysine. Ser-36 carries the phosphoserine modification. Thr-39 carries the phosphothreonine modification. Residue Arg-43 participates in beta-D-fructose 1,6-bisphosphate binding. Phosphothreonine is present on Thr-119. Position 121 is an N6-succinyllysine (Lys-121). Ser-132 is subject to Phosphoserine. The active-site Proton acceptor is the Glu-188. Lys-230 serves as the catalytic Schiff-base intermediate with dihydroxyacetone-P. 4 positions are modified to phosphoserine: Ser-272, Ser-276, Ser-299, and Ser-301. A beta-D-fructose 1,6-bisphosphate-binding site is contributed by 272-274 (SGG). Arg-304 contacts beta-D-fructose 1,6-bisphosphate. At Ser-309 the chain carries Phosphoserine. N6-succinyllysine is present on Lys-317.

The protein belongs to the class I fructose-bisphosphate aldolase family. As to quaternary structure, homotetramer. Interacts with BBS1, BBS2, BBS4 and BBS7. Forms a ternary complex with G6PD and TP53; this interaction is direct.

Its subcellular location is the cytoplasm. It localises to the cytosol. The protein localises to the cytoskeleton. The protein resides in the microtubule organizing center. It is found in the centrosome. Its subcellular location is the centriolar satellite. It catalyses the reaction beta-D-fructose 1,6-bisphosphate = D-glyceraldehyde 3-phosphate + dihydroxyacetone phosphate. The catalysed reaction is beta-D-fructose 1-phosphate = D-glyceraldehyde + dihydroxyacetone phosphate. It participates in carbohydrate degradation; glycolysis; D-glyceraldehyde 3-phosphate and glycerone phosphate from D-glucose: step 4/4. Its pathway is carbohydrate biosynthesis; gluconeogenesis. It functions in the pathway carbohydrate metabolism; fructose metabolism. Catalyzes the aldol cleavage of fructose 1,6-biphosphate to form two triosephosphates dihydroxyacetone phosphate and D-glyceraldehyde 3-phosphate in glycolysis as well as the reverse stereospecific aldol addition reaction in gluconeogenesis. In fructolysis, metabolizes fructose 1-phosphate derived from the phosphorylation of dietary fructose by fructokinase into dihydroxyacetone phosphate and D-glyceraldehyde. Acts as an adapter independently of its enzymatic activity, exerts a tumor suppressor role by stabilizing the ternary complex with G6PD and TP53 to inhibit G6PD activity and keep oxidative pentose phosphate metabolism in check. The chain is Fructose-bisphosphate aldolase B (ALDOB) from Ovis aries (Sheep).